Reading from the N-terminus, the 657-residue chain is Probable serine/threonine-protein kinase CA_C1728 (657 aa).

Positions 10 to 274 constitute a Protein kinase domain; that stretch reads YKIEEEIGVG…ELSNVKNNYV (265 aa). ATP contacts are provided by residues 16-24 and Lys39; that span reads IGVGGTAVV. Asp143 serves as the catalytic Proton acceptor. A disordered region spans residues 286–334; sequence PAQIQNESNPNNKLDNDDTYYNGEPYNKEQPQEEPQEENEEPKNKIKGN. A compositionally biased stretch (polar residues) spans 288–298; it reads QIQNESNPNNK. 3 consecutive PASTA domains span residues 375–441, 443–509, and 512–577; these read SVSK…DISS, DTDQ…VISR, and EVKK…VIGR. The tract at residues 581 to 657 is disordered; that stretch reads TAVQPPNNNN…TNTPNGTGQK (77 aa). Composition is skewed to low complexity over residues 584–600, 613–637, and 645–657; these read QPPN…QNQN, PTGG…PAGG, and GNVT…TGQK.

Belongs to the protein kinase superfamily. Ser/Thr protein kinase family.

The catalysed reaction is L-seryl-[protein] + ATP = O-phospho-L-seryl-[protein] + ADP + H(+). It carries out the reaction L-threonyl-[protein] + ATP = O-phospho-L-threonyl-[protein] + ADP + H(+). The protein is Probable serine/threonine-protein kinase CA_C1728 of Clostridium acetobutylicum (strain ATCC 824 / DSM 792 / JCM 1419 / IAM 19013 / LMG 5710 / NBRC 13948 / NRRL B-527 / VKM B-1787 / 2291 / W).